A 305-amino-acid chain; its full sequence is Putative lipid kinase SaurJH9_0749 (305 aa).

The DAGKc domain occupies 3–139 (NKYTHGVLFY…YDVIKINNQY (137 aa)). ATP-binding positions include S44, 74–80 (GDGTVNE), and T101. Mg(2+) is bound by residues S220, D223, and E225. The Proton acceptor role is filled by E281.

It belongs to the diacylglycerol/lipid kinase family. Mg(2+) serves as cofactor.

May catalyze the ATP-dependent phosphorylation of lipids other than diacylglycerol (DAG). This chain is Putative lipid kinase SaurJH9_0749, found in Staphylococcus aureus (strain JH9).